The sequence spans 173 residues: Large ribosomal subunit protein uL10 (173 aa).

This sequence belongs to the universal ribosomal protein uL10 family. In terms of assembly, part of the ribosomal stalk of the 50S ribosomal subunit. The N-terminus interacts with L11 and the large rRNA to form the base of the stalk. The C-terminus forms an elongated spine to which L12 dimers bind in a sequential fashion forming a multimeric L10(L12)X complex.

Functionally, forms part of the ribosomal stalk, playing a central role in the interaction of the ribosome with GTP-bound translation factors. This chain is Large ribosomal subunit protein uL10, found in Myxococcus xanthus (strain DK1622).